Reading from the N-terminus, the 508-residue chain is Photosystem II CP47 reaction center protein (508 aa).

6 consecutive transmembrane segments (helical) span residues 21 to 36 (AVHIMHTALVAGWAGS), 101 to 115 (IVFSGLCFLSAIWHW), 140 to 156 (GIHLFLSGVACFGFGAF), 203 to 218 (IAAGLLGIIAGLFHLS), 237 to 252 (VLSSSIAAVFFAAFIV), and 457 to 472 (TFALLFFFGHIWHGAR).

This sequence belongs to the PsbB/PsbC family. PsbB subfamily. PSII is composed of 1 copy each of membrane proteins PsbA, PsbB, PsbC, PsbD, PsbE, PsbF, PsbH, PsbI, PsbJ, PsbK, PsbL, PsbM, PsbT, PsbX, PsbY, PsbZ, Psb30/Ycf12, at least 3 peripheral proteins of the oxygen-evolving complex and a large number of cofactors. It forms dimeric complexes. It depends on Binds multiple chlorophylls. PSII binds additional chlorophylls, carotenoids and specific lipids. as a cofactor.

The protein resides in the plastid. Its subcellular location is the chloroplast thylakoid membrane. In terms of biological role, one of the components of the core complex of photosystem II (PSII). It binds chlorophyll and helps catalyze the primary light-induced photochemical processes of PSII. PSII is a light-driven water:plastoquinone oxidoreductase, using light energy to abstract electrons from H(2)O, generating O(2) and a proton gradient subsequently used for ATP formation. The chain is Photosystem II CP47 reaction center protein from Gnetum parvifolium (Small-leaved jointfir).